The chain runs to 44 residues: Photosystem II reaction center protein J (44 aa).

The chain crosses the membrane as a helical span at residues 12–32; that stretch reads IPLWIVGFVVGSLALGLLGIL.

The protein belongs to the PsbJ family. As to quaternary structure, PSII is composed of 1 copy each of membrane proteins PsbA, PsbB, PsbC, PsbD, PsbE, PsbF, PsbH, PsbI, PsbJ, PsbK, PsbL, PsbM, PsbT, PsbY, PsbZ, Psb30/Ycf12, at least 3 peripheral proteins of the oxygen-evolving complex and a large number of cofactors. It forms dimeric complexes.

The protein resides in the plastid. It is found in the chloroplast thylakoid membrane. In terms of biological role, one of the components of the core complex of photosystem II (PSII). PSII is a light-driven water:plastoquinone oxidoreductase that uses light energy to abstract electrons from H(2)O, generating O(2) and a proton gradient subsequently used for ATP formation. It consists of a core antenna complex that captures photons, and an electron transfer chain that converts photonic excitation into a charge separation. The protein is Photosystem II reaction center protein J of Bigelowiella natans (Pedinomonas minutissima).